Consider the following 116-residue polypeptide: Ribosome-binding factor A (116 aa).

This sequence belongs to the RbfA family. Monomer. Binds 30S ribosomal subunits, but not 50S ribosomal subunits or 70S ribosomes.

It is found in the cytoplasm. One of several proteins that assist in the late maturation steps of the functional core of the 30S ribosomal subunit. Associates with free 30S ribosomal subunits (but not with 30S subunits that are part of 70S ribosomes or polysomes). Required for efficient processing of 16S rRNA. May interact with the 5'-terminal helix region of 16S rRNA. The sequence is that of Ribosome-binding factor A from Chlorobium phaeobacteroides (strain BS1).